A 441-amino-acid chain; its full sequence is Tubulin beta-1 chain (441 aa).

GTP is bound by residues Gln-11, Glu-69, Ser-138, Gly-142, Thr-143, Gly-144, Asn-204, and Asn-226. Residue Glu-69 participates in Mg(2+) binding.

This sequence belongs to the tubulin family. Dimer of alpha and beta chains. A typical microtubule is a hollow water-filled tube with an outer diameter of 25 nm and an inner diameter of 15 nM. Alpha-beta heterodimers associate head-to-tail to form protofilaments running lengthwise along the microtubule wall with the beta-tubulin subunit facing the microtubule plus end conferring a structural polarity. Microtubules usually have 13 protofilaments but different protofilament numbers can be found in some organisms and specialized cells. Mg(2+) serves as cofactor. Expressed primarily in touch receptor neurons.

It is found in the cytoplasm. The protein localises to the cytoskeleton. Its function is as follows. Tubulin is the major constituent of microtubules, a cylinder consisting of laterally associated linear protofilaments composed of alpha- and beta-tubulin heterodimers. Microtubules grow by the addition of GTP-tubulin dimers to the microtubule end, where a stabilizing cap forms. Below the cap, tubulin dimers are in GDP-bound state, owing to GTPase activity of alpha-tubulin. Plays a role in mechanosensory transduction (touch sensitivity). Functionally, mec-7 beta-tubulin is required for the production of 15-protofilament microtubules. In Caenorhabditis briggsae, this protein is Tubulin beta-1 chain (mec-7).